A 263-amino-acid chain; its full sequence is MAVPIALTIAGSDSGGGAGIQADLRTFAFHQVHGTCAITCVTAQNTLGVTRVDAIAPAGVAAQLDAVLSDLPPQALKTGMLLNAEIMEVVAGTIAPLFIPRIIDPVMVSRTGAVLIDQAAIAVLRDHLLPLATVLTPNRYEAQLLAGMDIQDAADLDRAARIIRDLGPQAVLIKGGAATGDWHGVDWWWDGQQSHILKTEAIATPHTHGSGCTLAAAIAANAALGLEILAAAQAAKHYVTKALRHSLAIGQGQGPLGHFYPLF.

Residue glutamine 44 participates in 4-amino-5-hydroxymethyl-2-methylpyrimidine binding.

This sequence belongs to the ThiD family.

It carries out the reaction 4-amino-5-hydroxymethyl-2-methylpyrimidine + ATP = 4-amino-2-methyl-5-(phosphooxymethyl)pyrimidine + ADP + H(+). The catalysed reaction is 4-amino-2-methyl-5-(phosphooxymethyl)pyrimidine + ATP = 4-amino-2-methyl-5-(diphosphooxymethyl)pyrimidine + ADP. Its pathway is cofactor biosynthesis; thiamine diphosphate biosynthesis; 4-amino-2-methyl-5-diphosphomethylpyrimidine from 5-amino-1-(5-phospho-D-ribosyl)imidazole: step 2/3. It participates in cofactor biosynthesis; thiamine diphosphate biosynthesis; 4-amino-2-methyl-5-diphosphomethylpyrimidine from 5-amino-1-(5-phospho-D-ribosyl)imidazole: step 3/3. Its function is as follows. Catalyzes the phosphorylation of hydroxymethylpyrimidine phosphate (HMP-P) to HMP-PP, and of HMP to HMP-P. The chain is Hydroxymethylpyrimidine/phosphomethylpyrimidine kinase (thiD) from Synechococcus elongatus (strain ATCC 33912 / PCC 7942 / FACHB-805) (Anacystis nidulans R2).